We begin with the raw amino-acid sequence, 231 residues long: Eukaryotic translation initiation factor 4E allele A (231 aa).

Residues M1–A20 show a composition bias toward basic and acidic residues. The disordered stretch occupies residues M1–E36. Over residues E27–E36 the composition is skewed to acidic residues. EIF4G-binding stretches follow at residues H56 to E59 and F66 to H102. Residues R74–G79, K106, and W124–E125 contribute to the mRNA site. An intrachain disulfide couples C129 to C167. Residues Y150 to Q159 form an EIF4G-binding region. Residues R174–K179 and K219–R223 each bind mRNA.

Belongs to the eukaryotic initiation factor 4E family. As to quaternary structure, EIF4F is a multi-subunit complex, the composition of which varies with external and internal environmental conditions. It is composed of at least EIF4A, EIF4E and EIF4G. EIF4E is also known to interact with other partners. In higher plants two isoforms of EIF4F have been identified, named isoform EIF4F and isoform EIF(iso)4F. Isoform EIF4F has subunits p220 and p26, whereas isoform EIF(iso)4F has subunits p82 and p28. In terms of assembly, (Microbial infection) Interacts with viral genome-linked protein (VPg); this interaction is possible in susceptible hosts but impaired in resistant plants. According to the redox status, the Cys-129-Cys-167 disulfide bridge may have a role in regulating protein function by affecting its ability to bind capped mRNA.

The protein resides in the nucleus. It is found in the cytoplasm. In terms of biological role, component of the protein complex eIF4F, which is involved in the recognition of the mRNA cap, ATP-dependent unwinding of 5'-terminal secondary structure and recruitment of mRNA to the ribosome. Recognizes and binds the 7-methylguanosine-containing mRNA cap during an early step in the initiation of protein synthesis and facilitates ribosome binding by inducing the unwinding of the mRNAs secondary structures. Key component of recessive resistance to potyviruses. Functionally, (Microbial infection) Susceptibility host factor required for viral infection (e.g. Potato virus Y (PVY)) by recruiting viral RNAs to the host ribosomal complex via an interaction with viral genome-linked protein (VPg). In Solanum tuberosum (Potato), this protein is Eukaryotic translation initiation factor 4E allele A.